Consider the following 534-residue polypeptide: Nuclear polyadenylated RNA-binding protein 4 (534 aa).

Residues 1–154 (MSSDEEDFND…TKEERSKADL (154 aa)) are disordered. Phosphoserine is present on residues Ser-2 and Ser-3. Over residues 13-30 (GDDKPTTTEEVKKEEEQN) the composition is skewed to basic and acidic residues. Residues 37-78 (SQLDQLAALQALSSSLNKLNNPNSNNSSSNNSNQDTSSSKQD) are compositionally biased toward low complexity. 2 positions are modified to phosphoserine: Ser-51 and Ser-87. The segment covering 81–98 (ANDKEGSNEDTKNEKKQE) has biased composition (basic and acidic residues). 2 stretches are compositionally biased toward low complexity: residues 99–112 (SATSANANANASSA) and 121–144 (QLQQTMSQFQQPSSQSPPQQQVTQ). A compositionally biased stretch (basic and acidic residues) spans 145–154 (TKEERSKADL). RRM domains lie at 159–241 (CKMF…EQDK) and 243–320 (GKIF…RAEP). Phosphoserine is present on Ser-206. 2 disordered regions span residues 316 to 354 (KRAEPRHMQQKSSNNGGNNGGNNMNRRGGNFGNQGDFNQ) and 415 to 534 (MPPN…PYNR). Positions 336–354 (GNNMNRRGGNFGNQGDFNQ) are enriched in low complexity. Residues 420-459 (MTLNQPQQDSNATQGSPAPSDSDNNKSNDVQTIGNTSNTD) show a composition bias toward polar residues. Thr-458 carries the phosphothreonine modification. Ser-460 and Ser-462 each carry phosphoserine. Over residues 460-475 (SGSPPLNLPNGPKGPS) the composition is skewed to low complexity. Basic and acidic residues predominate over residues 478-505 (NDDHNSGYGYNRDRGDRDRNDRDRDYNH). Position 519 is an omega-N-methylarginine (Arg-519). Low complexity predominate over residues 523 to 534 (NRRNNGYHPYNR).

Interacts with NAM7. In terms of processing, methylated by HMT1. The methylation is required for nuclear export.

Its subcellular location is the cytoplasm. The protein resides in the nucleus. It localises to the stress granule. In terms of biological role, RNA-binding protein, which is involved in the polyadenylation-dependent pre-mRNA 3'-end formation and cooperates with the cleavage factor CFIA complex and the cleavage and polyadenylation factor (CPF) complex. May be involved in regulation of poly(A) site selection. Is involved in nonsense-mediated mRNA decay. Seems to bind to an RNA downstream sequence element (DSE) located 3' of a nonsense codon and may mark the transcript for decay. The chain is Nuclear polyadenylated RNA-binding protein 4 from Saccharomyces cerevisiae (strain ATCC 204508 / S288c) (Baker's yeast).